A 378-amino-acid polypeptide reads, in one-letter code: Succinyl-diaminopimelate desuccinylase (378 aa).

H67 serves as a coordination point for Zn(2+). D69 is a catalytic residue. Position 100 (D100) interacts with Zn(2+). The active-site Proton acceptor is E134. Zn(2+) contacts are provided by E135, E163, and H349.

This sequence belongs to the peptidase M20A family. DapE subfamily. Homodimer. Zn(2+) serves as cofactor. Requires Co(2+) as cofactor.

The enzyme catalyses N-succinyl-(2S,6S)-2,6-diaminopimelate + H2O = (2S,6S)-2,6-diaminopimelate + succinate. The protein operates within amino-acid biosynthesis; L-lysine biosynthesis via DAP pathway; LL-2,6-diaminopimelate from (S)-tetrahydrodipicolinate (succinylase route): step 3/3. Its function is as follows. Catalyzes the hydrolysis of N-succinyl-L,L-diaminopimelic acid (SDAP), forming succinate and LL-2,6-diaminopimelate (DAP), an intermediate involved in the bacterial biosynthesis of lysine and meso-diaminopimelic acid, an essential component of bacterial cell walls. The sequence is that of Succinyl-diaminopimelate desuccinylase from Pasteurella multocida (strain Pm70).